The primary structure comprises 90 residues: Aminoacyl carrier protein 1 (90 aa).

Positions 6–84 (TDVRNRIIKL…TLERMVMTQL (79 aa)) constitute a Carrier domain. At S42 the chain carries O-(pantetheine 4'-phosphoryl)serine.

In terms of processing, 4'-phosphopantetheine is transferred from CoA to a specific serine of the apo-form of this carrier protein.

Functionally, aminoacyl carrier protein. Can be charged with L-glycine via the formation of a thioester bond between the amino acid and the 4'-phosphopantetheinyl prosthetic group, catalyzed by the bll0957 ligase. The sequence is that of Aminoacyl carrier protein 1 from Bradyrhizobium diazoefficiens (strain JCM 10833 / BCRC 13528 / IAM 13628 / NBRC 14792 / USDA 110).